The chain runs to 219 residues: 7-cyano-7-deazaguanine synthase (219 aa).

10 to 20 serves as a coordination point for ATP; it reads FSGGQDSTTCL. Zn(2+)-binding residues include cysteine 187, cysteine 196, cysteine 199, and cysteine 202.

This sequence belongs to the QueC family. As to quaternary structure, homodimer. It depends on Zn(2+) as a cofactor.

It carries out the reaction 7-carboxy-7-deazaguanine + NH4(+) + ATP = 7-cyano-7-deazaguanine + ADP + phosphate + H2O + H(+). Its pathway is purine metabolism; 7-cyano-7-deazaguanine biosynthesis. Its function is as follows. Catalyzes the ATP-dependent conversion of 7-carboxy-7-deazaguanine (CDG) to 7-cyano-7-deazaguanine (preQ(0)). The protein is 7-cyano-7-deazaguanine synthase of Lysinibacillus sphaericus (strain C3-41).